The chain runs to 265 residues: Putative 2-aminoethylphosphonate transport system permease protein PhnV (265 aa).

Transmembrane regions (helical) follow at residues 13-33 (GVVA…VILM), 69-89 (LTIG…AALA), 104-124 (VFYL…LVAF), 131-151 (MNGT…AFTF), 185-205 (LPLL…LSMG), and 233-253 (NIAD…LLMM). The ABC transmembrane type-1 domain occupies 65–253 (LLASLTIGFC…LVAITLLLMM (189 aa)).

This sequence belongs to the binding-protein-dependent transport system permease family.

The protein resides in the cell inner membrane. Functionally, probably part of the PhnSTUV complex (TC 3.A.1.11.5) involved in 2-aminoethylphosphonate import. Probably responsible for the translocation of the substrate across the membrane. This is Putative 2-aminoethylphosphonate transport system permease protein PhnV (phnV) from Salmonella paratyphi A (strain ATCC 9150 / SARB42).